The sequence spans 79 residues: Cytochrome c-551 (79 aa).

Positions 1–14 (DGQSIYESGTSPTC) are enriched in polar residues. The disordered stretch occupies residues 1-35 (DGQSIYESGTSPTCASCHDRGTAGAPKINEPGDWD). Cys14, Cys17, His18, and Met55 together coordinate heme c.

Post-translationally, binds 1 heme c group covalently per subunit.

In Halorhodospira halochloris (Ectothiorhodospira halochloris), this protein is Cytochrome c-551.